An 827-amino-acid polypeptide reads, in one-letter code: Protein Jade-1 (827 aa).

The disordered stretch occupies residues 1–35 (MKRVCLPSSSEDSDDNGSLSTSWSQHSRSLPSFRH). The segment covering 16–30 (NGSLSTSWSQHSRSL) has biased composition (polar residues). The PHD-type 1 zinc-finger motif lies at 200–250 (DVVCDVCQSPDGEDGNEMVFCDKCNICVHQACYGILKVPEGSWLCRTCALG). The C2HC pre-PHD-type zinc finger occupies 252 to 286 (QPKCLLCPKKGGAMKPTRSGTKWVHVSCALWIPEV). The PHD-type 2 zinc finger occupies 310–366 (LLCSLCNEKVGACIQCSIKNCRTAFHVTCAFDHGLEMKTILTQEDEVKFKSYCPKHG). 2 disordered regions span residues 622 to 705 (TVAK…SSSL) and 769 to 810 (RTKE…SSSS). 2 stretches are compositionally biased toward basic and acidic residues: residues 646-661 (SRTQ…EKPL) and 669-682 (KHTE…EKKR). A compositionally biased stretch (polar residues) spans 692–705 (ATASSNKKQCSSSL).

Belongs to the JADE family. In terms of assembly, component of the HBO1 complex composed.

It localises to the nucleus. The protein localises to the chromosome. It is found in the cytoplasm. The protein resides in the cytoskeleton. Its subcellular location is the cilium basal body. Scaffold subunit of some HBO1 complexes, which have a histone H4 acetyltransferase activity. Plays a key role in HBO1 complex by directing KAT7/HBO1 specificity towards histone H4 acetylation (H4K5ac, H4K8ac and H4K12ac), regulating DNA replication initiation, regulating DNA replication initiation. The polypeptide is Protein Jade-1 (jade1) (Xenopus laevis (African clawed frog)).